The chain runs to 317 residues: Metaxin-1 (317 aa).

Glycyl lysine isopeptide (Lys-Gly) (interchain with G-Cter in ubiquitin) cross-links involve residues Lys-38, Lys-41, and Lys-78. The chain crosses the membrane as a helical span at residues 164-184; that stretch reads EELEKELYREARECLTLLSQR.

The protein belongs to the metaxin family. As to quaternary structure, interacts with MTX2/metaxin-2. Associates with the mitochondrial contact site and cristae organizing system (MICOS) complex, composed of at least MICOS10/MIC10, CHCHD3/MIC19, CHCHD6/MIC25, APOOL/MIC27, IMMT/MIC60, APOO/MIC23/MIC26 and QIL1/MIC13. This complex was also known under the names MINOS or MitOS complex. The MICOS complex associates with mitochondrial outer membrane proteins SAMM50, MTX1 and MTX2 (together described as components of the mitochondrial outer membrane sorting assembly machinery (SAM) complex) and DNAJC11, mitochondrial inner membrane protein TMEM11 and with HSPA9. The MICOS and SAM complexes together with DNAJC11 are part of a large protein complex spanning both membranes termed the mitochondrial intermembrane space bridging (MIB) complex. Interacts with ARMC1. Post-translationally, ubiquitinated by PRKN during mitophagy, leading to its degradation and enhancement of mitophagy. Deubiquitinated by USP30.

It is found in the mitochondrion outer membrane. Involved in transport of proteins into the mitochondrion. Essential for embryonic development. In Macaca fascicularis (Crab-eating macaque), this protein is Metaxin-1 (MTX1).